Reading from the N-terminus, the 330-residue chain is Poly(3-hydroxyalkanoate) polymerase subunit PhaE (330 aa).

The stretch at 298 to 328 forms a coiled coil; that stretch reads RSEVDEIHQTIYQLRKEVKSLKKRLGETEAN.

Belongs to the PHA/PHB synthase family. Type III PhaE subfamily. In terms of assembly, forms a heterodimer with PhaC, which may multimerize in the presence of 3-hydroxybutyryl-CoA. Both subunits are required for PHB synthesis in E.coli and in PHA-negative A.eutrophus.

The protein resides in the cytoplasm. Its pathway is biopolymer metabolism; poly-(R)-3-hydroxybutanoate biosynthesis. In terms of biological role, when expressed in E.coli with Synechocystis PhaC and C.necator PhaA and PhaB, confers the ability to synthesize up to 13% (w/w) poly(3-hydroxybutyrate) (PHB) depending on the carbon source; all 4 genes are necessary for PHB production. Cell-free in vitro coexpression with PhaE gives a heterodimer able to polymerize 3-hydroxybutyrate-CoA. This subunit has no catalytic activity but enhances the activity of PhaC, the catalytic subunit. The chain is Poly(3-hydroxyalkanoate) polymerase subunit PhaE from Synechocystis sp. (strain ATCC 27184 / PCC 6803 / Kazusa).